We begin with the raw amino-acid sequence, 309 residues long: Aspartate carbamoyltransferase catalytic subunit (309 aa).

Carbamoyl phosphate contacts are provided by Arg55 and Thr56. Residue Lys85 participates in L-aspartate binding. 3 residues coordinate carbamoyl phosphate: Arg106, His135, and Gln138. Residues Arg168 and Arg230 each coordinate L-aspartate. Positions 268 and 269 each coordinate carbamoyl phosphate.

It belongs to the aspartate/ornithine carbamoyltransferase superfamily. ATCase family. Heterododecamer (2C3:3R2) of six catalytic PyrB chains organized as two trimers (C3), and six regulatory PyrI chains organized as three dimers (R2).

The enzyme catalyses carbamoyl phosphate + L-aspartate = N-carbamoyl-L-aspartate + phosphate + H(+). The protein operates within pyrimidine metabolism; UMP biosynthesis via de novo pathway; (S)-dihydroorotate from bicarbonate: step 2/3. Catalyzes the condensation of carbamoyl phosphate and aspartate to form carbamoyl aspartate and inorganic phosphate, the committed step in the de novo pyrimidine nucleotide biosynthesis pathway. The sequence is that of Aspartate carbamoyltransferase catalytic subunit from Vibrio vulnificus (strain YJ016).